A 299-amino-acid chain; its full sequence is Coenzyme PQQ synthesis protein B (299 aa).

The protein belongs to the PqqB family.

Its pathway is cofactor biosynthesis; pyrroloquinoline quinone biosynthesis. Functionally, may be involved in the transport of PQQ or its precursor to the periplasm. This Methylorubrum extorquens (strain PA1) (Methylobacterium extorquens) protein is Coenzyme PQQ synthesis protein B.